The following is a 406-amino-acid chain: Acetylornithine aminotransferase (406 aa).

Residues 108-109 (GA) and phenylalanine 141 each bind pyridoxal 5'-phosphate. N(2)-acetyl-L-ornithine is bound at residue arginine 144. 226-229 (DEVQ) contacts pyridoxal 5'-phosphate. N6-(pyridoxal phosphate)lysine is present on lysine 255. Threonine 283 lines the N(2)-acetyl-L-ornithine pocket. Threonine 284 serves as a coordination point for pyridoxal 5'-phosphate.

Belongs to the class-III pyridoxal-phosphate-dependent aminotransferase family. ArgD subfamily. Homodimer. It depends on pyridoxal 5'-phosphate as a cofactor.

It is found in the cytoplasm. It catalyses the reaction N(2)-acetyl-L-ornithine + 2-oxoglutarate = N-acetyl-L-glutamate 5-semialdehyde + L-glutamate. It participates in amino-acid biosynthesis; L-arginine biosynthesis; N(2)-acetyl-L-ornithine from L-glutamate: step 4/4. This Pseudomonas putida (strain ATCC 47054 / DSM 6125 / CFBP 8728 / NCIMB 11950 / KT2440) protein is Acetylornithine aminotransferase.